Reading from the N-terminus, the 377-residue chain is Nitric oxide reductase FlRd-NAD(+) reductase (377 aa).

Belongs to the FAD-dependent oxidoreductase family. It depends on FAD as a cofactor.

It is found in the cytoplasm. It catalyses the reaction 2 reduced [nitric oxide reductase rubredoxin domain] + NAD(+) + H(+) = 2 oxidized [nitric oxide reductase rubredoxin domain] + NADH. It functions in the pathway nitrogen metabolism; nitric oxide reduction. Its function is as follows. One of at least two accessory proteins for anaerobic nitric oxide (NO) reductase. Reduces the rubredoxin moiety of NO reductase. The protein is Nitric oxide reductase FlRd-NAD(+) reductase of Salmonella typhimurium (strain LT2 / SGSC1412 / ATCC 700720).